Consider the following 89-residue polypeptide: MDIQLINIGFGNIVSANRVIAIVSPESAPIKRIISDARDKGCLIDATYGRRTRAVIITDSSHVVLSAIQPETVAHRFVVNKEAPVNSSN.

This sequence belongs to the RemA family.

The chain is Putative regulatory protein MAE_11840 from Microcystis aeruginosa (strain NIES-843 / IAM M-2473).